Reading from the N-terminus, the 147-residue chain is Hemoglobin subunit beta (147 aa).

The Globin domain occupies 2–147; it reads ELTEAQRGAI…VVSALGKQYH (146 aa). Heme b is bound by residues His63 and His92.

It belongs to the globin family. In terms of assembly, heterotetramer of two alpha chains and two beta chains. Red blood cells.

Functionally, involved in oxygen transport from gills to the various peripheral tissues. The sequence is that of Hemoglobin subunit beta (hbb) from Electrophorus electricus (Electric eel).